The chain runs to 135 residues: Large-conductance mechanosensitive channel (135 aa).

2 helical membrane-spanning segments follow: residues 9–29 (AFAA…GAAF) and 79–99 (IQTI…LKAI).

Belongs to the MscL family. As to quaternary structure, homopentamer.

Its subcellular location is the cell inner membrane. Functionally, channel that opens in response to stretch forces in the membrane lipid bilayer. May participate in the regulation of osmotic pressure changes within the cell. The chain is Large-conductance mechanosensitive channel from Aeromonas salmonicida (strain A449).